Reading from the N-terminus, the 459-residue chain is Probable PTS system sucrose-specific EIIBC component (459 aa).

The PTS EIIB type-1 domain maps to 1–86 (MHKEIAKELL…VHVWETAPSE (86 aa)). C25 (phosphocysteine intermediate; for EIIB activity) is an active-site residue. The 354-residue stretch at 106–459 (KTLSDIFVPI…LFLGFKEETE (354 aa)) folds into the PTS EIIC type-1 domain. Helical transmembrane passes span 111 to 131 (IFVP…LIGM), 147 to 167 (MLDL…GFSA), 177 to 197 (LGAV…SMLG), 209 to 229 (LHIP…SVFV), 245 to 265 (LDVV…ALIV), 288 to 308 (AGIA…LSGL), 329 to 349 (FLVP…LAVF), 360 to 380 (IALP…VFGV), 388 to 408 (FIGA…VQVV), 412 to 432 (YGLT…ANFV), and 434 to 454 (YMIG…FLGF).

It localises to the cell membrane. In terms of biological role, the phosphoenolpyruvate-dependent sugar phosphotransferase system (sugar PTS), a major carbohydrate active -transport system, catalyzes the phosphorylation of incoming sugar substrates concomitantly with their translocation across the cell membrane. This system may be involved in sucrose transport. The EIIB domain is mainly phosphorylated by the EIIA domains of GamP and PtsA/YpqE. Negatively regulates SacY activity by catalyzing its phosphorylation on 'His-99'. The sequence is that of Probable PTS system sucrose-specific EIIBC component (sacX) from Bacillus subtilis (strain 168).